The chain runs to 99 residues: MNKTEFIAFMTEHGHNNKHAAHKTLTKADAEKALNLVIESVISAIKSKHNVNLTGFGSFEIHHRKEREGRNPKTGAKMKIDAYNQPTFRAGRKLKEACN.

Residues 63–82 form a disordered region; sequence HRKEREGRNPKTGAKMKIDA.

This sequence belongs to the bacterial histone-like protein family. Homodimer.

In terms of biological role, histone-like DNA-binding protein which is capable of wrapping DNA to stabilize it, and thus to prevent its denaturation under extreme environmental conditions. The sequence is that of DNA-binding protein HU (hup) from Rickettsia prowazekii (strain Madrid E).